The chain runs to 386 residues: Succinate--CoA ligase [ADP-forming] subunit beta (386 aa).

In terms of domain architecture, ATP-grasp spans 9 to 235 (KELFAKHDVP…REEEDPLESA (227 aa)). ATP-binding positions include Lys44, 51-53 (GRG), Ala93, and Glu98. Positions 190 and 204 each coordinate Mg(2+). Residues Asn255 and 317–319 (GIT) contribute to the substrate site.

This sequence belongs to the succinate/malate CoA ligase beta subunit family. In terms of assembly, heterotetramer of two alpha and two beta subunits. Mg(2+) is required as a cofactor.

It carries out the reaction succinate + ATP + CoA = succinyl-CoA + ADP + phosphate. The catalysed reaction is GTP + succinate + CoA = succinyl-CoA + GDP + phosphate. Its pathway is carbohydrate metabolism; tricarboxylic acid cycle; succinate from succinyl-CoA (ligase route): step 1/1. Its function is as follows. Succinyl-CoA synthetase functions in the citric acid cycle (TCA), coupling the hydrolysis of succinyl-CoA to the synthesis of either ATP or GTP and thus represents the only step of substrate-level phosphorylation in the TCA. The beta subunit provides nucleotide specificity of the enzyme and binds the substrate succinate, while the binding sites for coenzyme A and phosphate are found in the alpha subunit. In Nocardioides sp. (strain ATCC BAA-499 / JS614), this protein is Succinate--CoA ligase [ADP-forming] subunit beta.